A 312-amino-acid polypeptide reads, in one-letter code: Acetylglutamate kinase (312 aa).

Residues 77–78, R99, and N192 each bind substrate; that span reads GG.

It belongs to the acetylglutamate kinase family. ArgB subfamily.

It localises to the cytoplasm. It catalyses the reaction N-acetyl-L-glutamate + ATP = N-acetyl-L-glutamyl 5-phosphate + ADP. Its pathway is amino-acid biosynthesis; L-arginine biosynthesis; N(2)-acetyl-L-ornithine from L-glutamate: step 2/4. Catalyzes the ATP-dependent phosphorylation of N-acetyl-L-glutamate. This chain is Acetylglutamate kinase, found in Synechococcus sp. (strain JA-2-3B'a(2-13)) (Cyanobacteria bacterium Yellowstone B-Prime).